A 284-amino-acid polypeptide reads, in one-letter code: Sulfotransferase 2A1 (284 aa).

Residues lysine 43, serine 44, glycine 45, threonine 46, asparagine 47, and tryptophan 48 each contribute to the 3'-phosphoadenylyl sulfate site. The active-site Proton acceptor is the histidine 98. Positions 120, 128, 183, 217, 222, 246, 247, and 248 each coordinate 3'-phosphoadenylyl sulfate.

It belongs to the sulfotransferase 1 family. In terms of assembly, homodimer.

Its subcellular location is the cytoplasm. It catalyses the reaction an alcohol + 3'-phosphoadenylyl sulfate = an alkyl sulfate + adenosine 3',5'-bisphosphate + H(+). The catalysed reaction is taurolithocholate + 3'-phosphoadenylyl sulfate = taurolithocholate 3-sulfate + adenosine 3',5'-bisphosphate + H(+). The enzyme catalyses lithocholate + 3'-phosphoadenylyl sulfate = lithocholate sulfate + adenosine 3',5'-bisphosphate + H(+). It carries out the reaction (24S)-hydroxycholesterol + 3'-phosphoadenylyl sulfate = (24S)-hydroxycholesterol 24-sulfate + adenosine 3',5'-bisphosphate + H(+). It catalyses the reaction (24S)-hydroxycholesterol + 3'-phosphoadenylyl sulfate = (24S)-hydroxycholesterol 3-sulfate + adenosine 3',5'-bisphosphate + H(+). The catalysed reaction is (24S)-hydroxycholesterol 24-sulfate + 3'-phosphoadenylyl sulfate = (24S)-hydroxycholesterol 3,24-disulfate + adenosine 3',5'-bisphosphate + H(+). The enzyme catalyses 3beta-hydroxyandrost-5-en-17-one + 3'-phosphoadenylyl sulfate = dehydroepiandrosterone 3-sulfate + adenosine 3',5'-bisphosphate + H(+). It carries out the reaction pregnenolone + 3'-phosphoadenylyl sulfate = pregnenolone sulfate + adenosine 3',5'-bisphosphate + H(+). It catalyses the reaction androsterone + 3'-phosphoadenylyl sulfate = androsterone 3alpha-sulfate + adenosine 3',5'-bisphosphate + H(+). In terms of biological role, sulfotransferase that utilizes 3'-phospho-5'-adenylyl sulfate (PAPS) as sulfonate donor to catalyze the sulfonation of steroids and bile acids in the liver and adrenal glands. Mediates the sulfation of a wide range of steroids and sterols, including pregnenolone, androsterone, DHEA, bile acids, cholesterol and as well many xenobiotics that contain alcohol and phenol functional groups. Sulfonation increases the water solubility of most compounds, and therefore their renal excretion, but it can also result in bioactivation to form active metabolites. Plays an important role in maintening steroid and lipid homeostasis. Plays a key role in bile acid metabolism. In addition, catalyzes the metabolic activation of potent carcinogenic polycyclic arylmethanols. This Rattus norvegicus (Rat) protein is Sulfotransferase 2A1 (Sult2a1).